Here is a 522-residue protein sequence, read N- to C-terminus: Glucose-6-phosphate isomerase (522 aa).

The active-site Proton donor is glutamate 351. Catalysis depends on residues histidine 382 and lysine 491.

Belongs to the GPI family.

It localises to the cytoplasm. It carries out the reaction alpha-D-glucose 6-phosphate = beta-D-fructose 6-phosphate. The protein operates within carbohydrate biosynthesis; gluconeogenesis. Its pathway is carbohydrate degradation; glycolysis; D-glyceraldehyde 3-phosphate and glycerone phosphate from D-glucose: step 2/4. Functionally, catalyzes the reversible isomerization of glucose-6-phosphate to fructose-6-phosphate. In Albidiferax ferrireducens (strain ATCC BAA-621 / DSM 15236 / T118) (Rhodoferax ferrireducens), this protein is Glucose-6-phosphate isomerase.